A 434-amino-acid polypeptide reads, in one-letter code: Urokinase-type plasminogen activator (434 aa).

Residues 1 to 20 form the signal peptide; the sequence is MKLIIFLTVTLCTLVTGLDS. Residues 36–72 form the EGF-like domain; it reads QHRECQCLNGGTCITYRFFSQIKRCLCPEGYGGLHCE. 12 disulfide bridges follow: Cys-40–Cys-48, Cys-42–Cys-60, Cys-62–Cys-71, Cys-79–Cys-158, Cys-96–Cys-139, Cys-128–Cys-152, Cys-162–Cys-296, Cys-202–Cys-218, Cys-210–Cys-285, Cys-310–Cys-379, Cys-342–Cys-358, and Cys-369–Cys-397. Residues 79–158 form the Kringle domain; that stretch reads CYSGNGEDYR…ETPCSTIEKC (80 aa). The connecting peptide stretch occupies residues 159 to 172; the sequence is ERTCGQRSFSKYFK. In terms of domain architecture, Peptidase S1 spans 173-421; sequence IVGGSQAEVE…YLNWIDSNMN (249 aa). His-217 functions as the Charge relay system in the catalytic mechanism. Asn-228 carries an N-linked (GlcNAc...) asparagine glycan. The active-site Charge relay system is Asp-272. Ser-373 (charge relay system) is an active-site residue.

This sequence belongs to the peptidase S1 family.

The protein localises to the secreted. It carries out the reaction Specific cleavage of Arg-|-Val bond in plasminogen to form plasmin.. Functionally, specifically cleaves the zymogen plasminogen to form the active enzyme plasmin. This chain is Urokinase-type plasminogen activator (PLAU), found in Gallus gallus (Chicken).